The chain runs to 178 residues: Large ribosomal subunit protein uL10 (178 aa).

Belongs to the universal ribosomal protein uL10 family. As to quaternary structure, part of the ribosomal stalk of the 50S ribosomal subunit. The N-terminus interacts with L11 and the large rRNA to form the base of the stalk. The C-terminus forms an elongated spine to which L12 dimers bind in a sequential fashion forming a multimeric L10(L12)X complex.

Functionally, forms part of the ribosomal stalk, playing a central role in the interaction of the ribosome with GTP-bound translation factors. This Stenotrophomonas maltophilia (strain R551-3) protein is Large ribosomal subunit protein uL10.